Here is a 341-residue protein sequence, read N- to C-terminus: Uroporphyrinogen decarboxylase (341 aa).

Residues 26–30 (RQAGR), Asp-75, Tyr-150, Ser-205, and His-318 each bind substrate.

This sequence belongs to the uroporphyrinogen decarboxylase family. In terms of assembly, homodimer.

Its subcellular location is the cytoplasm. It catalyses the reaction uroporphyrinogen III + 4 H(+) = coproporphyrinogen III + 4 CO2. Its pathway is porphyrin-containing compound metabolism; protoporphyrin-IX biosynthesis; coproporphyrinogen-III from 5-aminolevulinate: step 4/4. Its function is as follows. Catalyzes the decarboxylation of four acetate groups of uroporphyrinogen-III to yield coproporphyrinogen-III. The protein is Uroporphyrinogen decarboxylase of Thermus thermophilus (strain ATCC BAA-163 / DSM 7039 / HB27).